Reading from the N-terminus, the 100-residue chain is Integration host factor subunit alpha (100 aa).

Belongs to the bacterial histone-like protein family. In terms of assembly, heterodimer of an alpha and a beta chain.

Functionally, this protein is one of the two subunits of integration host factor, a specific DNA-binding protein that functions in genetic recombination as well as in transcriptional and translational control. This Jannaschia sp. (strain CCS1) protein is Integration host factor subunit alpha.